We begin with the raw amino-acid sequence, 218 residues long: Adenylate kinase (218 aa).

Position 10-15 (Gly10–Thr15) interacts with ATP. An NMP region spans residues Ser30–Val59. AMP-binding positions include Thr31, Arg36, Ala57–Val59, Gly85–Arg88, and Gln92. The LID stretch occupies residues Gly122–Asp159. ATP is bound by residues Arg123 and Thr132–Tyr133. AMP is bound by residues Arg156 and Arg167. An ATP-binding site is contributed by Gly203.

This sequence belongs to the adenylate kinase family. Monomer.

It localises to the cytoplasm. The catalysed reaction is AMP + ATP = 2 ADP. The protein operates within purine metabolism; AMP biosynthesis via salvage pathway; AMP from ADP: step 1/1. Its function is as follows. Catalyzes the reversible transfer of the terminal phosphate group between ATP and AMP. Plays an important role in cellular energy homeostasis and in adenine nucleotide metabolism. In Polaromonas sp. (strain JS666 / ATCC BAA-500), this protein is Adenylate kinase.